A 146-amino-acid polypeptide reads, in one-letter code: MSAKKVYGFLTQAFIFAVIMLVSNMIAAIVPIPIPASVVGLVLLFLLLCLKVIKLEQVETLGTSLTSLIGFLFVPSGISVMNSLGVMQQYGLQIVLVILLATIILLGATGLFSQLILSLSGKRKTEADMKTKTVQSPQNNNELVHH.

Helical transmembrane passes span 7–29 (YGFL…IAAI), 34–53 (IPAS…LKVI), 65–87 (LTSL…LGVM), and 97–119 (VILL…ILSL).

Belongs to the CidA/LrgA family. LrgA subfamily.

Its subcellular location is the cell membrane. Inhibits the expression or activity of extracellular murein hydrolases by interacting, possibly with LrgB, with the holin-like protein CidA. The LrgAB and CidA proteins may affect the proton motive force of the membrane. May be involved in programmed cell death (PCD), possibly triggering PCD in response to antibiotics and environmental stresses. The chain is Antiholin-like protein LrgA from Bacillus subtilis (strain 168).